The sequence spans 399 residues: L-methionine gamma-lyase (399 aa).

Pyridoxal 5'-phosphate-binding positions include 59–61 and 89–90; these read YTR and GI. Y114 is a binding site for substrate. 209-211 lines the pyridoxal 5'-phosphate pocket; sequence SAT. K212 carries the post-translational modification N6-(pyridoxal phosphate)lysine. R376 contacts substrate.

This sequence belongs to the trans-sulfuration enzymes family. L-methionine gamma-lyase subfamily. In terms of assembly, homotetramer; dimer of active dimers. The cofactor is pyridoxal 5'-phosphate.

The enzyme catalyses L-methionine + H2O = methanethiol + 2-oxobutanoate + NH4(+). The catalysed reaction is L-homocysteine + H2O = 2-oxobutanoate + hydrogen sulfide + NH4(+) + H(+). Catalyzes the alpha,gamma-elimination of L-methionine to produce methanethiol, 2-oxobutanoate and ammonia; methanethiol (methyl mercaptan) is considered to be one of the main causes of the oral malodor in periodontal disease and may also play a role in the pathogenicity of P.gingivalis in that disease. Is also able to catalyze the alpha,gamma-elimination of L-homocysteine. The protein is L-methionine gamma-lyase of Porphyromonas gingivalis (strain ATCC BAA-308 / W83).